We begin with the raw amino-acid sequence, 596 residues long: Germinal center kinase 3 (596 aa).

A compositionally biased stretch (low complexity) spans 1–54 (MSSSNLAGNTNTTTTSSAASAAAAHSAANASTITSEYSTTQTTTGTFNTDTLSS). A disordered region spans residues 1-80 (MSSSNLAGNT…PPPPPQVSSP (80 aa)). 2 positions are modified to phosphothreonine; by autocatalysis: threonine 13 and threonine 32. Pro residues predominate over residues 67–77 (SQPPPPPPPQV). In terms of domain architecture, Protein kinase spans 108–386 (YKLDESIGVG…ASELLKYSFF (279 aa)). ATP contacts are provided by residues 114–122 (IGVGATATV) and lysine 137. At serine 190 the chain carries Phosphoserine; by autocatalysis. Catalysis depends on aspartate 240, which acts as the Proton acceptor. Threonine 280 carries the post-translational modification Phosphothreonine. The residue at position 405 (serine 405) is a Phosphoserine; by autocatalysis. A Phosphoserine modification is found at serine 419. Positions 429–496 (NWEFEYDSPQ…EGGGATTPCP (68 aa)) are disordered. Residues 432–450 (FEYDSPQESDDDSDLEDEE) are compositionally biased toward acidic residues. The span at 466–479 (GAAGAAGGATGGAA) shows a compositional bias: gly residues.

It belongs to the protein kinase superfamily. STE Ser/Thr protein kinase family. STE20 subfamily. In terms of assembly, interacts (via C-terminus) with clh-3; required for the phosphorylation-mediated inhibition of clh-3 function. Interacts (via C-terminus) with wnk-1; the interaction is direct. Phosphorylated at Thr-280 and Ser-419 probably by wnk-1; phosphorylation results in weak activation. Predominantly autophosphorylated at Thr-32 and Ser-190 and weakly autophosphorylated at Thr-13 and Ser-405 in vitro. As to expression, ubiquitously expressed with a higher expression in the excretory cell. Expressed in both male and female germ cells; up-regulated in maturing spermatocytes but absent in mature sperm.

The protein resides in the cytoplasm. Its subcellular location is the nucleus. It catalyses the reaction L-seryl-[protein] + ATP = O-phospho-L-seryl-[protein] + ADP + H(+). It carries out the reaction L-threonyl-[protein] + ATP = O-phospho-L-threonyl-[protein] + ADP + H(+). Plays a role in osmotic stress responses by regulating ion homeostasis and by controlling cell volume via the phosphorylation-mediated inhibition of the chloride channel clh-3. In addition, increases gpdh-1 translation upon osmotic stress, likely downstream of wnk-1. Involved in several developmental processes including the tubular formation of the excretory canals, the formation of the intestine and the progression through larval stages. In addition, required for germ line development by controlling meiosis and chromosomal segregation during spermatogenesis. By controlling clh-3 activity, may regulate the development of the excretory canals and fertility. The protein is Germinal center kinase 3 of Caenorhabditis elegans.